Here is a 102-residue protein sequence, read N- to C-terminus: MAKQKIRIRLKAYDHRVIDQSAEKIVETAKRSGADVSGPIPLPTERSVYTVIRAVHKYKDSREQFEQRTHKRLIDIVNPTPKTVDALMGLNLPSGVDIEIKL.

The protein belongs to the universal ribosomal protein uS10 family. In terms of assembly, part of the 30S ribosomal subunit.

Its function is as follows. Involved in the binding of tRNA to the ribosomes. This chain is Small ribosomal subunit protein uS10, found in Staphylococcus saprophyticus subsp. saprophyticus (strain ATCC 15305 / DSM 20229 / NCIMB 8711 / NCTC 7292 / S-41).